The chain runs to 488 residues: GTPase Der (488 aa).

2 consecutive EngA-type G domains span residues 3 to 166 and 193 to 366; these read PVIA…PRDP and IKIA…MSAV. GTP is bound by residues 9–16, 56–60, 118–121, 199–206, 246–250, and 311–314; these read GRPNVGKS, DTGGI, NKID, DTAGV, and NKWD. Residues 367-451 enclose the KH-like domain; the sequence is TRWPTSRLTQ…PIRIEYKGGD (85 aa). Over residues 449–461 the composition is skewed to basic and acidic residues; it reads GGDNPFEGKKNTL. The interval 449-488 is disordered; it reads GGDNPFEGKKNTLTDRQVNKKRRLMSHHKKAEKKRRDKRK. The segment covering 467 to 488 has biased composition (basic residues); sequence NKKRRLMSHHKKAEKKRRDKRK.

Belongs to the TRAFAC class TrmE-Era-EngA-EngB-Septin-like GTPase superfamily. EngA (Der) GTPase family. In terms of assembly, associates with the 50S ribosomal subunit.

In terms of biological role, GTPase that plays an essential role in the late steps of ribosome biogenesis. This Pseudomonas entomophila (strain L48) protein is GTPase Der.